Reading from the N-terminus, the 201-residue chain is Thylakoid membrane protein slr1796 (201 aa).

Residues 16–36 (FLIVSLAFAMLLLGIWGTLPF) form a helical membrane-spanning segment.

It localises to the cellular thylakoid membrane. In Synechocystis sp. (strain ATCC 27184 / PCC 6803 / Kazusa), this protein is Thylakoid membrane protein slr1796.